A 152-amino-acid chain; its full sequence is Ribosome maturation factor RimP (152 aa).

The protein belongs to the RimP family.

It is found in the cytoplasm. Its function is as follows. Required for maturation of 30S ribosomal subunits. This chain is Ribosome maturation factor RimP, found in Pectobacterium atrosepticum (strain SCRI 1043 / ATCC BAA-672) (Erwinia carotovora subsp. atroseptica).